We begin with the raw amino-acid sequence, 302 residues long: Oxygen-dependent coproporphyrinogen-III oxidase (302 aa).

S94 provides a ligand contact to substrate. Positions 98 and 108 each coordinate a divalent metal cation. Residue H108 is the Proton donor of the active site. A substrate-binding site is contributed by 110-112 (NVR). Residues H147 and H177 each coordinate a divalent metal cation. Residues 242–277 (YVEFNLVYDRGTIFGLQSGGRTESILMSLPPLVRWD) form an important for dimerization region. 260–262 (GGR) is a binding site for substrate.

This sequence belongs to the aerobic coproporphyrinogen-III oxidase family. As to quaternary structure, homodimer. Requires a divalent metal cation as cofactor.

The protein resides in the cytoplasm. It carries out the reaction coproporphyrinogen III + O2 + 2 H(+) = protoporphyrinogen IX + 2 CO2 + 2 H2O. It functions in the pathway porphyrin-containing compound metabolism; protoporphyrin-IX biosynthesis; protoporphyrinogen-IX from coproporphyrinogen-III (O2 route): step 1/1. In terms of biological role, involved in the heme biosynthesis. Catalyzes the aerobic oxidative decarboxylation of propionate groups of rings A and B of coproporphyrinogen-III to yield the vinyl groups in protoporphyrinogen-IX. This Alcanivorax borkumensis (strain ATCC 700651 / DSM 11573 / NCIMB 13689 / SK2) protein is Oxygen-dependent coproporphyrinogen-III oxidase.